Here is a 211-residue protein sequence, read N- to C-terminus: Ribosomal RNA small subunit methyltransferase G (211 aa).

Residues G78, M83, 129 to 130 (AE), and R144 each bind S-adenosyl-L-methionine.

It belongs to the methyltransferase superfamily. RNA methyltransferase RsmG family.

Its subcellular location is the cytoplasm. It carries out the reaction guanosine(527) in 16S rRNA + S-adenosyl-L-methionine = N(7)-methylguanosine(527) in 16S rRNA + S-adenosyl-L-homocysteine. Specifically methylates the N7 position of guanine in position 527 of 16S rRNA. The polypeptide is Ribosomal RNA small subunit methyltransferase G (Pseudomonas syringae pv. tomato (strain ATCC BAA-871 / DC3000)).